A 492-amino-acid chain; its full sequence is Catalase isozyme 2 (492 aa).

The disordered stretch occupies residues 1–32 (MDPYKFRPSSSNDTPFWTTNAGDPVSNNNSSM). A compositionally biased stretch (polar residues) spans 8-32 (PSSSNDTPFWTTNAGDPVSNNNSSM). Residues H65 and N138 contribute to the active site. Position 348 (Y348) interacts with heme.

It belongs to the catalase family. Homotetramer. Requires heme as cofactor. In terms of tissue distribution, abundant in hypocotyls and roots. Low levels are seen in the endosperms and cotyledons.

The protein localises to the peroxisome. The protein resides in the glyoxysome. The catalysed reaction is 2 H2O2 = O2 + 2 H2O. Functionally, occurs in almost all aerobically respiring organisms and serves to protect cells from the toxic effects of hydrogen peroxide. The sequence is that of Catalase isozyme 2 (CAT2) from Ricinus communis (Castor bean).